A 95-amino-acid chain; its full sequence is Putative small ubiquitin-related modifier 7 (95 aa).

One can recognise a Ubiquitin-like domain in the interval 13–90; sequence SHITIKIKSQ…IDAFVDQIAG (78 aa). Gly90 participates in a covalent cross-link: Glycyl lysine isopeptide (Gly-Lys) (interchain with K-? in acceptor proteins).

Belongs to the ubiquitin family. SUMO subfamily. Interacts with SAE2, SCE1, SIZ1 and MMS21 Covalently attached to a number of proteins.

It localises to the nucleus. Its subcellular location is the cytoplasm. Ubiquitin-like protein which can be covalently attached to target lysines as a monomer. Does not seem to be involved in protein degradation and may function as an antagonist of ubiquitin in the degradation process. The polypeptide is Putative small ubiquitin-related modifier 7 (SUMO7) (Arabidopsis thaliana (Mouse-ear cress)).